The following is a 474-amino-acid chain: tRNA-2-methylthio-N(6)-dimethylallyladenosine synthase (474 aa).

One can recognise an MTTase N-terminal domain in the interval 3 to 120 (KKLLIKTWGC…LPEMIRQSQS (118 aa)). Positions 12, 49, 83, 157, 161, and 164 each coordinate [4Fe-4S] cluster. In terms of domain architecture, Radical SAM core spans 143 to 375 (KAEGATAFVS…QQQVNSQAMR (233 aa)). The region spanning 378–441 (RLMLDTEQRV…ANSLRGELVR (64 aa)) is the TRAM domain.

This sequence belongs to the methylthiotransferase family. MiaB subfamily. As to quaternary structure, monomer. The cofactor is [4Fe-4S] cluster.

Its subcellular location is the cytoplasm. The catalysed reaction is N(6)-dimethylallyladenosine(37) in tRNA + (sulfur carrier)-SH + AH2 + 2 S-adenosyl-L-methionine = 2-methylsulfanyl-N(6)-dimethylallyladenosine(37) in tRNA + (sulfur carrier)-H + 5'-deoxyadenosine + L-methionine + A + S-adenosyl-L-homocysteine + 2 H(+). Its function is as follows. Catalyzes the methylthiolation of N6-(dimethylallyl)adenosine (i(6)A), leading to the formation of 2-methylthio-N6-(dimethylallyl)adenosine (ms(2)i(6)A) at position 37 in tRNAs that read codons beginning with uridine. The chain is tRNA-2-methylthio-N(6)-dimethylallyladenosine synthase from Aliivibrio fischeri (strain ATCC 700601 / ES114) (Vibrio fischeri).